The primary structure comprises 219 residues: Large ribosomal subunit protein bL25 (219 aa).

Positions 176-219 (VTVVPPTDEPSEEEVEAMEGESATEEPEVVDEDKEDDEEENKED) are disordered. A compositionally biased stretch (acidic residues) spans 184-219 (EPSEEEVEAMEGESATEEPEVVDEDKEDDEEENKED).

The protein belongs to the bacterial ribosomal protein bL25 family. CTC subfamily. Part of the 50S ribosomal subunit; part of the 5S rRNA/L5/L18/L25 subcomplex. Contacts the 5S rRNA. Binds to the 5S rRNA independently of L5 and L18.

In terms of biological role, this is one of the proteins that binds to the 5S RNA in the ribosome where it forms part of the central protuberance. The sequence is that of Large ribosomal subunit protein bL25 from Staphylococcus epidermidis (strain ATCC 12228 / FDA PCI 1200).